Consider the following 301-residue polypeptide: Lipoyl synthase (301 aa).

Residues C53, C58, C64, C79, C83, C86, and S290 each coordinate [4Fe-4S] cluster. Residues 65–279 (WSRKTATYML…RIYGKSIGFK (215 aa)) enclose the Radical SAM core domain.

The protein belongs to the radical SAM superfamily. Lipoyl synthase family. [4Fe-4S] cluster is required as a cofactor.

It is found in the cytoplasm. It carries out the reaction [[Fe-S] cluster scaffold protein carrying a second [4Fe-4S](2+) cluster] + N(6)-octanoyl-L-lysyl-[protein] + 2 oxidized [2Fe-2S]-[ferredoxin] + 2 S-adenosyl-L-methionine + 4 H(+) = [[Fe-S] cluster scaffold protein] + N(6)-[(R)-dihydrolipoyl]-L-lysyl-[protein] + 4 Fe(3+) + 2 hydrogen sulfide + 2 5'-deoxyadenosine + 2 L-methionine + 2 reduced [2Fe-2S]-[ferredoxin]. It participates in protein modification; protein lipoylation via endogenous pathway; protein N(6)-(lipoyl)lysine from octanoyl-[acyl-carrier-protein]: step 2/2. Catalyzes the radical-mediated insertion of two sulfur atoms into the C-6 and C-8 positions of the octanoyl moiety bound to the lipoyl domains of lipoate-dependent enzymes, thereby converting the octanoylated domains into lipoylated derivatives. The protein is Lipoyl synthase of Leptospira interrogans serogroup Icterohaemorrhagiae serovar Lai (strain 56601).